Consider the following 286-residue polypeptide: Uridylate cyclase (286 aa).

The 134-residue stretch at 90-223 (TAIFVDIRKS…DAVTKAANMS (134 aa)) folds into the Guanylate cyclase domain. Residue Phe-93 participates in a ribonucleoside 5'-triphosphate binding. Residues Asp-95, Ile-96, and Asp-140 each contribute to the Mn(2+) site.

This sequence belongs to the adenylyl cyclase class-4/guanylyl cyclase family. Pyrimidine cyclase subfamily. As to quaternary structure, homodimer. Mn(2+) serves as cofactor.

It localises to the cytoplasm. The catalysed reaction is UTP = 3',5'-cyclic UMP + diphosphate. In terms of biological role, pycsar (pyrimidine cyclase system for antiphage resistance) provides immunity against bacteriophage. The pyrimidine cyclase (PycC) synthesizes cyclic nucleotides in response to infection; these serve as specific second messenger signals. The signals activate the adjacent effector, leading to bacterial cell death and abortive phage infection. A clade C Pycsar system. Its function is as follows. The pyrimidine cyclase gene of a two-gene Pycsar system, weakly generates cyclic UMP (cUMP) from UTP, has little to no activity on ATP, CTP or GTP. Expression of this and adjacent effector TpPycTM (AC A0A1T4LJG1) probably confers resistance to bacteriophage. The genes are probably only expressed in response to bacteriophage infection. The sequence is that of Uridylate cyclase from Treponema porcinum.